We begin with the raw amino-acid sequence, 294 residues long: ATP phosphoribosyltransferase (294 aa).

This sequence belongs to the ATP phosphoribosyltransferase family. Long subfamily. Mg(2+) serves as cofactor.

The protein resides in the cytoplasm. It carries out the reaction 1-(5-phospho-beta-D-ribosyl)-ATP + diphosphate = 5-phospho-alpha-D-ribose 1-diphosphate + ATP. It participates in amino-acid biosynthesis; L-histidine biosynthesis; L-histidine from 5-phospho-alpha-D-ribose 1-diphosphate: step 1/9. Its activity is regulated as follows. Feedback inhibited by histidine. Its function is as follows. Catalyzes the condensation of ATP and 5-phosphoribose 1-diphosphate to form N'-(5'-phosphoribosyl)-ATP (PR-ATP). Has a crucial role in the pathway because the rate of histidine biosynthesis seems to be controlled primarily by regulation of HisG enzymatic activity. This chain is ATP phosphoribosyltransferase, found in Prosthecochloris aestuarii (strain DSM 271 / SK 413).